The sequence spans 422 residues: UDP-N-acetylmuramoylalanine--D-glutamate ligase (422 aa).

102–108 contacts ATP; it reads GTNGKTT.

Belongs to the MurCDEF family.

The protein localises to the cytoplasm. The enzyme catalyses UDP-N-acetyl-alpha-D-muramoyl-L-alanine + D-glutamate + ATP = UDP-N-acetyl-alpha-D-muramoyl-L-alanyl-D-glutamate + ADP + phosphate + H(+). Its pathway is cell wall biogenesis; peptidoglycan biosynthesis. Functionally, cell wall formation. Catalyzes the addition of glutamate to the nucleotide precursor UDP-N-acetylmuramoyl-L-alanine (UMA). The protein is UDP-N-acetylmuramoylalanine--D-glutamate ligase of Helicobacter pylori (strain ATCC 700392 / 26695) (Campylobacter pylori).